A 399-amino-acid polypeptide reads, in one-letter code: L-2-hydroxyglutarate dehydrogenase (399 aa).

Belongs to the L2HGDH family. FAD serves as cofactor.

It catalyses the reaction (S)-2-hydroxyglutarate + A = 2-oxoglutarate + AH2. Functionally, catalyzes the dehydrogenation of L-2-hydroxyglutarate (L2HG or(S)-2-hydroxyglutarate) to 2-oxoglutarate (alpha-ketoglutarate). Active in vitro with the artificial electron acceptor 2,6-dichlorophenolindophenol (DCPIP). Also displays a very low oxidase activity in vitro on L-2-hydroxyglutarate with O2 as the electron acceptor, but this activity is most likely not physiological. This chain is L-2-hydroxyglutarate dehydrogenase, found in Indibacter alkaliphilus (strain CCUG 57479 / KCTC 22604 / LW1).